The following is a 554-amino-acid chain: Beta-eudesmol synthase (554 aa).

Asp-305, Asp-309, and Glu-456 together coordinate Mg(2+). Positions 305-309 match the DDXXD motif motif; the sequence is DDIYD.

Belongs to the terpene synthase family. It depends on Mg(2+) as a cofactor. Mn(2+) serves as cofactor. Expressed in rhizomes. Detected in stems, but not in leaves.

Its subcellular location is the cytoplasm. The enzyme catalyses (2E,6E)-farnesyl diphosphate + H2O = beta-eudesmol + diphosphate. It catalyses the reaction (2E,6E)-farnesyl diphosphate + H2O = 10-epi-gamma-eudesmol + diphosphate. The catalysed reaction is (2E,6E)-farnesyl diphosphate + H2O = alpha-eudesmol + diphosphate. It participates in secondary metabolite biosynthesis; terpenoid biosynthesis. In terms of biological role, involved in the biosynthesis of beta-eudesmol, a sesquiterpene with antifungal activity and responsible for resistance of plants to ant attack. Produces mainly beta-eudesmol, but also smaller amounts of 10-epi-gamma-eudesmol, alpha-eudesmol and aristolene. The protein is Beta-eudesmol synthase (ZSS2) of Zingiber zerumbet (Shampoo ginger).